The following is a 196-amino-acid chain: Large ribosomal subunit protein eL15 (196 aa).

Residues 69-98 show a composition bias toward basic residues; it reads RKGGSRKQRHKAGRRSKRQGVNRLSRRKSI. Disordered regions lie at residues 69–100 and 161–196; these read RKGG…SIQR and FRGL…RQGK. Over residues 186–196 the composition is skewed to polar residues; that stretch reads PSVTGNDRQGK.

This sequence belongs to the eukaryotic ribosomal protein eL15 family.

The sequence is that of Large ribosomal subunit protein eL15 from Halorubrum lacusprofundi (strain ATCC 49239 / DSM 5036 / JCM 8891 / ACAM 34).